Reading from the N-terminus, the 365-residue chain is Class I histocompatibility antigen, Gogo-A*0101 alpha chain (365 aa).

A signal peptide spans 1-24; sequence MAVMAPRTLVLLLSGALALTQTWA. The tract at residues 25–114 is alpha-1; it reads GSHSMRYFST…LRGYYNQSED (90 aa). Residues 25-308 are Extracellular-facing; it reads GSHSMRYFST…EPSSQPTIPI (284 aa). The N-linked (GlcNAc...) asparagine glycan is linked to Asn-110. The tract at residues 115 to 206 is alpha-2; that stretch reads GSHTIQRMYG…ENGKETLQRT (92 aa). 2 cysteine pairs are disulfide-bonded: Cys-125-Cys-188 and Cys-227-Cys-283. Residues 207–298 form an alpha-3 region; the sequence is DAPKTHMTHH…GLPEPLTLRW (92 aa). The Ig-like C1-type domain maps to 209–297; that stretch reads PKTHMTHHAV…EGLPEPLTLR (89 aa). The tract at residues 299-308 is connecting peptide; sequence EPSSQPTIPI. The chain crosses the membrane as a helical span at residues 309–332; it reads VGIIAGLVLFGAVIAGAVVAAVRW. At 333–365 the chain is on the cytoplasmic side; sequence RRKSSDRKGGSYSQAASSDSAQGSDVSLTACKV. Residues 338-365 form a disordered region; the sequence is DRKGGSYSQAASSDSAQGSDVSLTACKV. Residues 342 to 359 are compositionally biased toward low complexity; sequence GSYSQAASSDSAQGSDVS. Ser-343 is subject to Phosphoserine. Residue Tyr-344 is modified to Phosphotyrosine. Residues Ser-345, Ser-349, Ser-350, Ser-352, Ser-356, and Ser-359 each carry the phosphoserine modification.

The protein belongs to the MHC class I family. As to quaternary structure, heterodimer of an alpha chain and a beta chain (beta-2-microglobulin).

It localises to the membrane. In terms of biological role, involved in the presentation of foreign antigens to the immune system. The sequence is that of Class I histocompatibility antigen, Gogo-A*0101 alpha chain from Gorilla gorilla gorilla (Western lowland gorilla).